An 88-amino-acid chain; its full sequence is Small ribosomal subunit protein bS20 (88 aa).

The tract at residues 1–27 (MANSKSAKKRALQSEKRRQHNASRRSM) is disordered.

The protein belongs to the bacterial ribosomal protein bS20 family.

In terms of biological role, binds directly to 16S ribosomal RNA. The polypeptide is Small ribosomal subunit protein bS20 (Shewanella sp. (strain ANA-3)).